The sequence spans 164 residues: 3-hydroxyacyl-[acyl-carrier-protein] dehydratase FabZ (164 aa).

Residue histidine 61 is part of the active site.

Belongs to the thioester dehydratase family. FabZ subfamily.

The protein localises to the cytoplasm. The enzyme catalyses a (3R)-hydroxyacyl-[ACP] = a (2E)-enoyl-[ACP] + H2O. Functionally, involved in unsaturated fatty acids biosynthesis. Catalyzes the dehydration of short chain beta-hydroxyacyl-ACPs and long chain saturated and unsaturated beta-hydroxyacyl-ACPs. This is 3-hydroxyacyl-[acyl-carrier-protein] dehydratase FabZ from Ralstonia nicotianae (strain ATCC BAA-1114 / GMI1000) (Ralstonia solanacearum).